We begin with the raw amino-acid sequence, 478 residues long: Protein nucleotidyltransferase YdiU (478 aa).

Positions 84, 86, 87, 107, 119, 120, 170, and 177 each coordinate ATP. Asp246 functions as the Proton acceptor in the catalytic mechanism. The Mg(2+) site is built by Asn247 and Asp256. Position 256 (Asp256) interacts with ATP.

This sequence belongs to the SELO family. The cofactor is Mg(2+). Mn(2+) serves as cofactor.

The enzyme catalyses L-seryl-[protein] + ATP = 3-O-(5'-adenylyl)-L-seryl-[protein] + diphosphate. It catalyses the reaction L-threonyl-[protein] + ATP = 3-O-(5'-adenylyl)-L-threonyl-[protein] + diphosphate. The catalysed reaction is L-tyrosyl-[protein] + ATP = O-(5'-adenylyl)-L-tyrosyl-[protein] + diphosphate. It carries out the reaction L-histidyl-[protein] + UTP = N(tele)-(5'-uridylyl)-L-histidyl-[protein] + diphosphate. The enzyme catalyses L-seryl-[protein] + UTP = O-(5'-uridylyl)-L-seryl-[protein] + diphosphate. It catalyses the reaction L-tyrosyl-[protein] + UTP = O-(5'-uridylyl)-L-tyrosyl-[protein] + diphosphate. Functionally, nucleotidyltransferase involved in the post-translational modification of proteins. It can catalyze the addition of adenosine monophosphate (AMP) or uridine monophosphate (UMP) to a protein, resulting in modifications known as AMPylation and UMPylation. This is Protein nucleotidyltransferase YdiU from Escherichia coli O6:K15:H31 (strain 536 / UPEC).